Consider the following 171-residue polypeptide: UPF0260 protein Nham_1404 (171 aa).

The protein belongs to the UPF0260 family.

The chain is UPF0260 protein Nham_1404 from Nitrobacter hamburgensis (strain DSM 10229 / NCIMB 13809 / X14).